The chain runs to 951 residues: Pheromone-regulated membrane protein 10 (951 aa).

Polar residues-rich tracts occupy residues 1-10 (MSSSYGNNGD), 68-84 (GGST…NVGS), and 92-104 (RTAS…NRRQ). 3 disordered regions span residues 1 to 293 (MSSS…EDPI), 313 to 366 (AGKS…TMVS), and 433 to 487 (NDSS…LPNF). Residues 126–135 (DDDDEEEEEH) are compositionally biased toward acidic residues. Basic and acidic residues predominate over residues 219-234 (PHQETNDGRNSAESHS). 3 stretches are compositionally biased toward polar residues: residues 318 to 332 (PGTQ…SSEH), 354 to 366 (PFNQ…TMVS), and 468 to 484 (SQTN…SMNL). The next 10 membrane-spanning stretches (helical) occupy residues 635 to 655 (WVSV…AFGG), 657 to 677 (WINM…QFIV), 687 to 707 (VFEV…GSIP), 711 to 731 (ICFG…YIIL), 753 to 773 (IIYS…FGWI), 786 to 806 (NISP…LGLI), 811 to 831 (WTQL…TYFS), 841 to 861 (FTSA…SRIW), 863 to 883 (GFAV…GVAS), and 918 to 938 (VTMI…TLFI).

Belongs to the ThrE exporter (TC 2.A.79) family.

It is found in the membrane. The polypeptide is Pheromone-regulated membrane protein 10 (Kluyveromyces lactis (strain ATCC 8585 / CBS 2359 / DSM 70799 / NBRC 1267 / NRRL Y-1140 / WM37) (Yeast)).